Consider the following 289-residue polypeptide: Caffeoylpyruvate hydrolase (289 aa).

Positions 140, 142, and 171 each coordinate a divalent metal cation.

It belongs to the FAH family. Homodimer. Mg(2+) is required as a cofactor. Mn(2+) serves as cofactor.

It catalyses the reaction (E)-caffeoylpyruvate + H2O = (E)-caffeate + pyruvate + H(+). The protein operates within secondary metabolite biosynthesis. Caffeoylpyruvate hydrolase; part of the gene cluster that mediates the fungal bioluminescence cycle. Involved in the recycling of oxyluciferin, a pyruvic acid adduct of caffeic acid, to caffeic acid. The fungal bioluminescence cycle begins with the hispidin synthetase that catalyzes the formation of hispidin which is further hydroxylated by the hispidin-3-hydroxylase, yielding the fungal luciferin 3-hydroxyhispidin. The luciferase then produces an endoperoxide as a high-energy intermediate with decomposition that yields oxyluciferin (also known as caffeoylpyruvate) and light emission. Oxyluciferin can be recycled to caffeic acid by caffeoylpyruvate hydrolase. The protein is Caffeoylpyruvate hydrolase of Neonothopanus nambi (Agaricus nambi).